The following is a 160-amino-acid chain: Ribosomal RNA large subunit methyltransferase H (160 aa).

S-adenosyl-L-methionine contacts are provided by Leu-76 and Gly-108.

The protein belongs to the RNA methyltransferase RlmH family. In terms of assembly, homodimer.

It localises to the cytoplasm. It carries out the reaction pseudouridine(1915) in 23S rRNA + S-adenosyl-L-methionine = N(3)-methylpseudouridine(1915) in 23S rRNA + S-adenosyl-L-homocysteine + H(+). Functionally, specifically methylates the pseudouridine at position 1915 (m3Psi1915) in 23S rRNA. This Xanthobacter autotrophicus (strain ATCC BAA-1158 / Py2) protein is Ribosomal RNA large subunit methyltransferase H.